The following is a 388-amino-acid chain: Chorismate synthase (388 aa).

NADP(+) contacts are provided by arginine 39 and arginine 45. FMN contacts are provided by residues 132 to 134 (RSS), 251 to 252 (NA), glycine 296, 311 to 315 (KPIPT), and arginine 337.

As to quaternary structure, homotetramer. It depends on FMNH2 as a cofactor.

It catalyses the reaction 5-O-(1-carboxyvinyl)-3-phosphoshikimate = chorismate + phosphate. It participates in metabolic intermediate biosynthesis; chorismate biosynthesis; chorismate from D-erythrose 4-phosphate and phosphoenolpyruvate: step 7/7. Catalyzes the anti-1,4-elimination of the C-3 phosphate and the C-6 proR hydrogen from 5-enolpyruvylshikimate-3-phosphate (EPSP) to yield chorismate, which is the branch point compound that serves as the starting substrate for the three terminal pathways of aromatic amino acid biosynthesis. This reaction introduces a second double bond into the aromatic ring system. This Staphylococcus aureus protein is Chorismate synthase.